Here is a 481-residue protein sequence, read N- to C-terminus: Glutamate--tRNA ligase (481 aa).

Positions 28-38 (PSPTGFLHLGG) match the 'HIGH' region motif. Basic and acidic residues predominate over residues 139–148 (RYDGTWRPEP). Positions 139–159 (RYDGTWRPEPGKTLPPVPADR) are disordered. Positions 260–264 (KLSKR) match the 'KMSKS' region motif. Lys-263 is an ATP binding site.

The protein belongs to the class-I aminoacyl-tRNA synthetase family. Glutamate--tRNA ligase type 1 subfamily. As to quaternary structure, monomer.

Its subcellular location is the cytoplasm. It carries out the reaction tRNA(Glu) + L-glutamate + ATP = L-glutamyl-tRNA(Glu) + AMP + diphosphate. Functionally, catalyzes the attachment of glutamate to tRNA(Glu) in a two-step reaction: glutamate is first activated by ATP to form Glu-AMP and then transferred to the acceptor end of tRNA(Glu). The chain is Glutamate--tRNA ligase from Bordetella parapertussis (strain 12822 / ATCC BAA-587 / NCTC 13253).